We begin with the raw amino-acid sequence, 211 residues long: Inactive ribonuclease-like protein 10 (211 aa).

Positions 1 to 24 are cleaved as a signal peptide; the sequence is MKLTLVQIFFMMLLLLLGLGVGLG.

It belongs to the pancreatic ribonuclease family. The N-terminus is blocked. Glycosylated.

It localises to the secreted. Its function is as follows. Secreted proximal epididymal protein required for post-testicular sperm maturation and male fertility. May be involved in sperm adhesion to the egg zona pellucida. Does not have ribonuclease activity. This chain is Inactive ribonuclease-like protein 10 (RNASE10), found in Bos taurus (Bovine).